Consider the following 188-residue polypeptide: UPF0232 protein RHA1_ro03670 (188 aa).

Disordered regions lie at residues M1–K20, E31–G78, and P166–G188. Residues P7 to E16 are compositionally biased toward low complexity.

It belongs to the UPF0232 family.

In Rhodococcus jostii (strain RHA1), this protein is UPF0232 protein RHA1_ro03670.